The following is a 223-amino-acid chain: Endonuclease V (223 aa).

Mg(2+) is bound by residues aspartate 35 and aspartate 103.

This sequence belongs to the endonuclease V family. The cofactor is Mg(2+).

The protein resides in the cytoplasm. The enzyme catalyses Endonucleolytic cleavage at apurinic or apyrimidinic sites to products with a 5'-phosphate.. Functionally, DNA repair enzyme involved in the repair of deaminated bases. Selectively cleaves double-stranded DNA at the second phosphodiester bond 3' to a deoxyinosine leaving behind the intact lesion on the nicked DNA. The sequence is that of Endonuclease V from Salmonella paratyphi A (strain ATCC 9150 / SARB42).